A 285-amino-acid polypeptide reads, in one-letter code: Foldase protein PrsA 2 (285 aa).

The signal sequence occupies residues 1 to 20; sequence MRGKHIFIITALISILMLSA. Cys-21 is lipidated: N-palmitoyl cysteine. The S-diacylglycerol cysteine moiety is linked to residue Cys-21. The PpiC domain occupies 134–224; that stretch reads KPEIKASHIL…NGYHVIKLTD (91 aa).

Belongs to the PrsA family.

Its subcellular location is the cell membrane. The enzyme catalyses [protein]-peptidylproline (omega=180) = [protein]-peptidylproline (omega=0). Functionally, plays a major role in protein secretion by helping the post-translocational extracellular folding of several secreted proteins. This chain is Foldase protein PrsA 2 (prsA2), found in Bacillus cereus (strain ATCC 14579 / DSM 31 / CCUG 7414 / JCM 2152 / NBRC 15305 / NCIMB 9373 / NCTC 2599 / NRRL B-3711).